Reading from the N-terminus, the 850-residue chain is Pro-neuregulin-2, membrane-bound isoform (850 aa).

Positions 1-96 are disordered; the sequence is MRQVCCSALP…AAAAGGMRRD (96 aa). The propeptide occupies 1 to 111; that stretch reads MRQVCCSALP…SMLLFGVSLA (111 aa). Over residues 20–59 the composition is skewed to low complexity; sequence SSYSDSSSSSSERSSSSSSSSSESGSSSRSSSNNSSISRP. N-linked (GlcNAc...) asparagine glycosylation is found at Asn52 and Asn53. A compositionally biased stretch (pro residues) spans 60-74; that stretch reads AAPPEPRPQQQPQPR. The segment covering 75–92 has biased composition (low complexity); the sequence is SPAARRAAARSRAAAAGG. The Extracellular segment spans residues 112–405; that stretch reads CYSPSLKSVQ…QKAEELYQKR (294 aa). N-linked (GlcNAc...) asparagine glycosylation is found at Asn147, Asn278, and Asn346. Residues 237–332 form the Ig-like C2-type domain; the sequence is PKLKKMKSQT…RGRLYVNSVS (96 aa). Cystine bridges form between Cys257–Cys311, Cys345–Cys359, Cys353–Cys370, and Cys372–Cys381. Residues 341–382 enclose the EGF-like domain; the sequence is HARKCNETAKSYCVNGGVCYYIEGINQLSCKCPNGFFGQRCL. The chain crosses the membrane as a helical span at residues 406 to 426; the sequence is VLTITGICVALLVVGIVCVVA. Over 427–850 the chain is Cytoplasmic; the sequence is YCKTKKQRKQ…PRAKQDSAPL (424 aa). Disordered stretches follow at residues 492–535, 566–585, 647–681, 700–788, and 801–850; these read TFSG…DSQS, EERRRATAPPYHDSVDSLRD, LLRHPAPPGPGPGPGPGPGPGADMQRSYDSYYYPA, LPAS…DGAL, and AHDA…SAPL. The segment covering 494–506 has biased composition (low complexity); it reads SGSHSCSPSHHCS. The segment covering 514 to 527 has biased composition (basic and acidic residues); sequence HRHESHTWSLERSE. A compositionally biased stretch (pro residues) spans 651–665; the sequence is PAPPGPGPGPGPGPG. The span at 750–767 shows a compositional bias: low complexity; the sequence is GLAAQRARAARDSLSLSS.

Belongs to the neuregulin family. In terms of assembly, interacts with ERBB3 and ERBB4. In terms of processing, proteolytic cleavage close to the plasma membrane on the external face leads to the release of the soluble growth factor form. Post-translationally, extensive glycosylation precedes the proteolytic cleavage. As to expression, restricted to the cerebellum in the adult.

The protein resides in the cell membrane. The protein localises to the secreted. Direct ligand for ERBB3 and ERBB4 tyrosine kinase receptors. Concomitantly recruits ERBB1 and ERBB2 coreceptors, resulting in ligand-stimulated tyrosine phosphorylation and activation of the ERBB receptors. May also promote the heterodimerization with the EGF receptor. The protein is Pro-neuregulin-2, membrane-bound isoform (NRG2) of Homo sapiens (Human).